The chain runs to 1229 residues: DNA-directed RNA polymerase subunit beta (1229 aa).

Residues 1175–1229 form a disordered region; it reads ESIDEDEQPQGLGAFERGLEEVENGEEDDDKEKFYEDLMDASQEQDESADDDIDE. Composition is skewed to acidic residues over residues 1195-1204 and 1211-1229; these read EVENGEEDDD and DLMD…DIDE.

The protein belongs to the RNA polymerase beta chain family. The RNAP catalytic core consists of 2 alpha, 1 beta, 1 beta' and 1 omega subunit. When a sigma factor is associated with the core the holoenzyme is formed, which can initiate transcription.

The catalysed reaction is RNA(n) + a ribonucleoside 5'-triphosphate = RNA(n+1) + diphosphate. Its function is as follows. DNA-dependent RNA polymerase catalyzes the transcription of DNA into RNA using the four ribonucleoside triphosphates as substrates. This Caldicellulosiruptor saccharolyticus (strain ATCC 43494 / DSM 8903 / Tp8T 6331) protein is DNA-directed RNA polymerase subunit beta.